The sequence spans 733 residues: Protein ROG3 (733 aa).

The PY-motif signature appears at 460–463; sequence PPNY. The interval 518–566 is disordered; it reads RDNLGLPPSASSAAASRSLSPLLNVPAPEDGTERILPQSALGPNSGSVP. A compositionally biased stretch (low complexity) spans 523-540; it reads LPPSASSAAASRSLSPLL. Positions 625–628 match the PY-motif motif; that stretch reads PPSY. 2 disordered regions span residues 636 to 658 and 693 to 733; these read QPRKPSRVHSRNSSTTLSSSIPT and ELTS…GNKR. Over residues 646–658 the composition is skewed to low complexity; it reads RNSSTTLSSSIPT.

It belongs to the arrestin family. As to quaternary structure, interacts with RSP5 via its 2 PY-motifs.

In terms of biological role, involved in resistance to GST substrate o-dinitrobenzene (o-DNB). This Saccharomyces cerevisiae (strain ATCC 204508 / S288c) (Baker's yeast) protein is Protein ROG3 (ROG3).